A 139-amino-acid polypeptide reads, in one-letter code: Transcription antitermination protein NusB (139 aa).

This sequence belongs to the NusB family.

Its function is as follows. Involved in transcription antitermination. Required for transcription of ribosomal RNA (rRNA) genes. Binds specifically to the boxA antiterminator sequence of the ribosomal RNA (rrn) operons. This Edwardsiella ictaluri (strain 93-146) protein is Transcription antitermination protein NusB.